We begin with the raw amino-acid sequence, 682 residues long: Methionine--tRNA ligase (682 aa).

Residues 14–24 (PYANGSIHLGH) carry the 'HIGH' region motif. Zn(2+) is bound by residues cysteine 145, cysteine 148, cysteine 158, and cysteine 161. A 'KMSKS' region motif is present at residues 331–335 (KMSKS). Position 334 (lysine 334) interacts with ATP. Residues 580 to 682 (AFAAVDLRVA…SGAKPGQRIK (103 aa)) form the tRNA-binding domain.

The protein belongs to the class-I aminoacyl-tRNA synthetase family. MetG type 1 subfamily. Homodimer. Zn(2+) is required as a cofactor.

It localises to the cytoplasm. The catalysed reaction is tRNA(Met) + L-methionine + ATP = L-methionyl-tRNA(Met) + AMP + diphosphate. In terms of biological role, is required not only for elongation of protein synthesis but also for the initiation of all mRNA translation through initiator tRNA(fMet) aminoacylation. The sequence is that of Methionine--tRNA ligase from Pseudomonas savastanoi pv. phaseolicola (strain 1448A / Race 6) (Pseudomonas syringae pv. phaseolicola (strain 1448A / Race 6)).